A 464-amino-acid chain; its full sequence is Fumarate hydratase class II (464 aa).

Substrate is bound by residues serine 98 to threonine 100, histidine 129 to aspartate 132, serine 139 to asparagine 141, and threonine 187. The active-site Proton donor/acceptor is histidine 188. Serine 318 is a catalytic residue. Substrate-binding positions include serine 319 and lysine 324 to asparagine 326.

This sequence belongs to the class-II fumarase/aspartase family. Fumarase subfamily. Homotetramer.

The protein resides in the cytoplasm. The enzyme catalyses (S)-malate = fumarate + H2O. It participates in carbohydrate metabolism; tricarboxylic acid cycle; (S)-malate from fumarate: step 1/1. Involved in the TCA cycle. Catalyzes the stereospecific interconversion of fumarate to L-malate. The polypeptide is Fumarate hydratase class II (Wigglesworthia glossinidia brevipalpis).